Consider the following 855-residue polypeptide: Spindle and centriole-associated protein 1 (855 aa).

Residues 164–200 are disordered; the sequence is QALNDVDGEEEGTVTSQSGESENENELDNSLNSQSNT. Position 235 is a phosphothreonine (threonine 235). Over residues 300-311 the composition is skewed to basic residues; that stretch reads KPNLHALSKPKK. Residues 300 to 328 are disordered; that stretch reads KPNLHALSKPKKNMLSGSTTSADLPNRTN. Over residues 314-328 the composition is skewed to polar residues; sequence LSGSTTSADLPNRTN. The stretch at 325–437 forms a coiled coil; it reads NRTNSNLDVL…TQARLRQYMV (113 aa). Phosphoserine occurs at positions 640 and 644. A coiled-coil region spans residues 725 to 751; that stretch reads GSMEERIAELNRQSMEARGKLLQLIEQ. Phosphoserine is present on residues serine 760, serine 764, and serine 819. Residues 789–834 form a disordered region; sequence EAPESSKCSTVSPVSEINTRRSSGATSNSCSPLNATSGSGRFTPLN. The segment covering 794 to 828 has biased composition (polar residues); it reads SKCSTVSPVSEINTRRSSGATSNSCSPLNATSGSG.

As to quaternary structure, interacts with CEP120.

It is found in the cytoplasm. The protein localises to the cytoskeleton. Its subcellular location is the microtubule organizing center. The protein resides in the centrosome. It localises to the centriole. It is found in the spindle. Its function is as follows. Regulator required for centriole duplication, for proper bipolar spindle formation and chromosome congression in mitosis. In Pongo abelii (Sumatran orangutan), this protein is Spindle and centriole-associated protein 1 (SPICE1).